The chain runs to 509 residues: Photosystem II CP47 reaction center protein (509 aa).

Helical transmembrane passes span 21 to 36 (AVHL…WAGS), 101 to 115 (IILS…IWHW), 140 to 156 (GIHL…FGAF), 203 to 218 (IAAG…FHLT), 237 to 252 (VLSS…AFVT), and 457 to 472 (NFAL…HGGR).

This sequence belongs to the PsbB/PsbC family. PsbB subfamily. As to quaternary structure, PSII is composed of 1 copy each of membrane proteins PsbA, PsbB, PsbC, PsbD, PsbE, PsbF, PsbH, PsbI, PsbJ, PsbK, PsbL, PsbM, PsbT, PsbX, PsbY, PsbZ, Psb30/Ycf12, at least 3 peripheral proteins of the oxygen-evolving complex and a large number of cofactors. It forms dimeric complexes. It depends on Binds multiple chlorophylls. PSII binds additional chlorophylls, carotenoids and specific lipids. as a cofactor.

It is found in the plastid. It localises to the chloroplast thylakoid membrane. Functionally, one of the components of the core complex of photosystem II (PSII). It binds chlorophyll and helps catalyze the primary light-induced photochemical processes of PSII. PSII is a light-driven water:plastoquinone oxidoreductase, using light energy to abstract electrons from H(2)O, generating O(2) and a proton gradient subsequently used for ATP formation. In Trieres chinensis (Marine centric diatom), this protein is Photosystem II CP47 reaction center protein.